A 589-amino-acid polypeptide reads, in one-letter code: MASEIHMSEPMCLIENTEAQLVINQEALRILSAITQPVVVVAIVGLYRTGKSYLMNKLAGKRTGFSLGSTVQSHTKGIWMWCVPHPKKAGQTLVLLDTEGLEDVEKGDNQNDCWIFALAVLLSSTFIYNSIGTINQQAMDQLHYVTELTDLIKSKSSPDQSGVDDSANFVGFFPTFVWTLRDFSLELEVNGKPVTSDEYLEHSLTLKKGADKKTKSFNEPRLCIRKFFPKRKCFIFDRPAQRKQLSKLETLREEELCGEFVEQVAEFTSYILSYSSVKTLCGGIIVNGPRLKSLVQTYVGAISNGSLPCMESAVLTLAQIENSAAVQKAITHYEEQMNQKIQMPTETLQELLDLHRPIESEAIEVFLKNSFKDVDQKFQTELGNLLVAKRDAFIKKNMDVSSARCSDLLEDIFGPLEEEVKLGTFSKPGGYYLFLQMRQELEKKYNQAPGKGLQAEAMLKNYFDSKADVVETLLQTDQSLTEAAKEVEEERTKAEAAEAANRELEKKQKEFELMMQQKEKSYQEHVKKLTEKMKDEQKQLLAEQENIIAAKLREQEKFLKEGFENESKKLIREIDTLKQNKSSGKCTIL.

The GTPase domain (Globular) stretch occupies residues 1-309; it reads MASEIHMSEP…GAISNGSLPC (309 aa). Residues 35 to 276 enclose the GB1/RHD3-type G domain; that stretch reads TQPVVVVAIV…FTSYILSYSS (242 aa). GTP-binding positions include 45-52, 181-182, and L245; these read GLYRTGKS and RD. Residue C586 is modified to Cysteine methyl ester. C586 is lipidated: S-geranylgeranyl cysteine. Positions 587–589 are cleaved as a propeptide — removed in mature form; that stretch reads TIL.

It belongs to the TRAFAC class dynamin-like GTPase superfamily. GB1/RHD3 GTPase family. GB1 subfamily. As to quaternary structure, homodimer; homodimerization occurs upon GTP-binding and is required for the association with membranous structures. Heterodimer with other family members, including GBP1, GBP3, GBP4 and GBP5. Post-translationally, isoprenylation is required for proper subcellular location.

The protein resides in the cytoplasmic vesicle membrane. The protein localises to the golgi apparatus membrane. It localises to the cytoplasm. Its subcellular location is the perinuclear region. The catalysed reaction is GTP + H2O = GDP + phosphate + H(+). In terms of biological role, interferon (IFN)-inducible GTPase that plays important roles in innate immunity against a diverse range of bacterial, viral and protozoan pathogens. Hydrolyzes GTP to GMP in 2 consecutive cleavage reactions, but the major reaction product is GDP. Following infection, recruited to the pathogen-containing vacuoles or vacuole-escaped bacteria and acts as a positive regulator of inflammasome assembly by promoting the release of inflammasome ligands from bacteria. Acts by promoting lysis of pathogen-containing vacuoles, releasing pathogens into the cytosol. Following pathogen release in the cytosol, promotes recruitment of proteins that mediate bacterial cytolysis, such as Gm12250/Irgb10: this liberates ligands that are detected by inflammasomes, such as lipopolysaccharide (LPS) that activates the non-canonical CASP4/CASP11 inflammasome or double-stranded DNA (dsDNA) that activates the AIM2 inflammasome. Confers protection to the protozoan pathogen Toxoplasma gondii. Independently of its GTPase activity, acts as an inhibitor of various viruses infectivity by inhibiting FURIN-mediated maturation of viral envelope proteins. This Mus musculus (Mouse) protein is Guanylate-binding protein 2.